Here is a 481-residue protein sequence, read N- to C-terminus: RAC-beta serine/threonine-protein kinase (481 aa).

At M1 the chain carries N-acetylmethionine. The 104-residue stretch at 5–108 (SVIKEGWLHK…WMRAIQMVAN (104 aa)) folds into the PH domain. Residue S34 is modified to Phosphoserine. Residues C60 and C77 are joined by a disulfide bond. S126 is modified (phosphoserine). 2 O-linked (GlcNAc) serine glycosylation sites follow: S128 and S131. Residues 152–409 (FDYLKLLGKG…AKEVMEHRFF (258 aa)) form the Protein kinase domain. Residues 158-166 (LGKGTFGKV) and K181 contribute to the ATP site. The Proton acceptor role is filled by D275. Residues N280 and D293 each coordinate Mn(2+). Cysteines 297 and 311 form a disulfide. T306 carries an O-linked (GlcNAc) threonine glycan. T309 is modified (phosphothreonine; by PDPK1). O-linked (GlcNAc) threonine glycosylation occurs at T313. An AGC-kinase C-terminal domain is found at 410-481 (LSINWQDVVQ…QFSYSASIRE (72 aa)). S447 bears the Phosphoserine mark. Residue T451 is modified to Phosphothreonine. S474 and S478 each carry phosphoserine; by MTOR. O-linked (GlcNAc) serine; alternate glycosylation is present at S474.

The protein belongs to the protein kinase superfamily. AGC Ser/Thr protein kinase family. RAC subfamily. In terms of assembly, interacts with BTBD10. Interacts with KCTD20. Interacts (via PH domain) with MTCP1, TCL1A and TCL1B; this interaction may facilitate AKT2 oligomerization and phosphorylation, hence increasing kinase activity. Interacts with PHB2; this interaction may be important for myogenic differentiation. Interacts (when phosphorylated) with CLIP3/ClipR-59; this interaction promotes cell membrane localization. Interacts with WDFY2 (via WD repeats 1-3). Post-translationally, phosphorylation on Thr-309 and Ser-474 is required for full activity. Phosphorylation of the activation loop at Thr-309 by PDPK1/PDK1 is a prerequisite for full activation. Phosphorylated and activated by PDPK1/PDK1 in the presence of phosphatidylinositol 3,4,5-trisphosphate. Phosphorylation by mTORC2 in response to growth factors plays a key role in AKT1 activation: mTORC2 phosphorylates different sites depending on the context, such as Ser-474 or Ser-478, thereby facilitating subsequent phosphorylation of the activation loop by PDPK1/PDK1. In terms of processing, ubiquitinated; undergoes both 'Lys-48'- and 'Lys-63'-linked polyubiquitination. TRAF6-induced 'Lys-63'-linked AKT2 ubiquitination. When fully phosphorylated and translocated into the nucleus, undergoes 'Lys-48'-polyubiquitination catalyzed by TTC3, leading to its degradation by the proteasome. O-GlcNAcylation at Thr-306 and Thr-313 inhibits activating phosphorylation at Thr-309 via disrupting the interaction between AKT and PDPK1/PDK1.

It localises to the cytoplasm. It is found in the nucleus. Its subcellular location is the cell membrane. The protein resides in the early endosome. The catalysed reaction is L-seryl-[protein] + ATP = O-phospho-L-seryl-[protein] + ADP + H(+). It carries out the reaction L-threonyl-[protein] + ATP = O-phospho-L-threonyl-[protein] + ADP + H(+). Two specific sites, one in the kinase domain (Thr-309) and the other in the C-terminal regulatory region (Ser-474), need to be phosphorylated for its full activation. AKT2 phosphorylation of PKP1 is induced by insulin. Inhibited by Akt inhibitor MK2206. In terms of biological role, AKT2 is one of 3 closely related serine/threonine-protein kinases (AKT1, AKT2 and AKT3) called the AKT kinases, and which regulate many processes including metabolism, proliferation, cell survival, growth and angiogenesis. This is mediated through serine and/or threonine phosphorylation of a range of downstream substrates. Over 100 substrate candidates have been reported so far, but for most of them, no isoform specificity has been reported. AKT is responsible of the regulation of glucose uptake by mediating insulin-induced translocation of the SLC2A4/GLUT4 glucose transporter to the cell surface. Phosphorylation of PTPN1 at 'Ser-50' negatively modulates its phosphatase activity preventing dephosphorylation of the insulin receptor and the attenuation of insulin signaling. Phosphorylation of TBC1D4 triggers the binding of this effector to inhibitory 14-3-3 proteins, which is required for insulin-stimulated glucose transport. AKT also regulates the storage of glucose in the form of glycogen by phosphorylating GSK3A at 'Ser-21' and GSK3B at 'Ser-9', resulting in inhibition of its kinase activity. Phosphorylation of GSK3 isoforms by AKT is also thought to be one mechanism by which cell proliferation is driven. AKT also regulates cell survival via the phosphorylation of MAP3K5 (apoptosis signal-related kinase). Phosphorylation of 'Ser-83' decreases MAP3K5 kinase activity stimulated by oxidative stress and thereby prevents apoptosis. AKT mediates insulin-stimulated protein synthesis by phosphorylating TSC2 at 'Ser-939' and 'Thr-1462', thereby activating mTORC1 signaling and leading to both phosphorylation of 4E-BP1 and in activation of RPS6KB1. AKT is involved in the phosphorylation of members of the FOXO factors (Forkhead family of transcription factors), leading to binding of 14-3-3 proteins and cytoplasmic localization. In particular, FOXO1 is phosphorylated at 'Thr-24', 'Ser-256' and 'Ser-319'. FOXO3 and FOXO4 are phosphorylated on equivalent sites. AKT has an important role in the regulation of NF-kappa-B-dependent gene transcription and positively regulates the activity of CREB1 (cyclic AMP (cAMP)-response element binding protein). The phosphorylation of CREB1 induces the binding of accessory proteins that are necessary for the transcription of pro-survival genes such as BCL2 and MCL1. AKT phosphorylates 'Ser-454' on ATP citrate lyase (ACLY), thereby potentially regulating ACLY activity and fatty acid synthesis. Activates the 3B isoform of cyclic nucleotide phosphodiesterase (PDE3B) via phosphorylation of 'Ser-273', resulting in reduced cyclic AMP levels and inhibition of lipolysis. Phosphorylates PIKFYVE on 'Ser-318', which results in increased PI(3)P-5 activity. The Rho GTPase-activating protein DLC1 is another substrate and its phosphorylation is implicated in the regulation cell proliferation and cell growth. AKT plays a role as key modulator of the AKT-mTOR signaling pathway controlling the tempo of the process of newborn neurons integration during adult neurogenesis, including correct neuron positioning, dendritic development and synapse formation. Signals downstream of phosphatidylinositol 3-kinase (PI(3)K) to mediate the effects of various growth factors such as platelet-derived growth factor (PDGF), epidermal growth factor (EGF), insulin and insulin-like growth factor I (IGF-I). AKT mediates the antiapoptotic effects of IGF-I. Essential for the SPATA13-mediated regulation of cell migration and adhesion assembly and disassembly. May be involved in the regulation of the placental development. In response to lysophosphatidic acid stimulation, inhibits the ciliogenesis cascade. In this context, phosphorylates WDR44, hence stabilizing its interaction with Rab11 and preventing the formation of the ciliogenic Rab11-FIP3-RAB3IP complex. Also phosphorylates RAB3IP/Rabin8, thus may affect RAB3IP guanine nucleotide exchange factor (GEF) activity toward Rab8, which is important for cilia growth. Phosphorylates PKP1, facilitating its interaction with YWHAG and translocation to the nucleus, ultimately resulting in a reduction in keratinocyte intercellular adhesion. Phosphorylation of PKP1 increases PKP1 protein stability, translocation to the cytoplasm away from desmosome plaques and PKP1-driven cap-dependent translation. Its function is as follows. Several AKT2-specific substrates have been identified, including ANKRD2, C2CD5, CLK2 and PITX2. May play a role in myoblast differentiation. In this context, may act through PITX2 phosphorylation. Unphosphorylated PITX2 associates with an ELAVL1/HuR-containing complex, which stabilizes cyclin mRNA and ensuring cell proliferation. Phosphorylation by AKT2 impairs this association, leading to CCND1 mRNA destabilization and progression towards differentiation. Also involved in the negative regulation of myogenesis in response to stress conditions. In this context, acts by phosphorylating ANKRD2. May also be a key regulator of glucose uptake. Regulates insulin-stimulated glucose transport by the increase of glucose transporter GLUT4 translocation from intracellular stores to the plasma membrane. In this context, acts by phosphorylating C2CD5/CDP138 on 'Ser-197' in insulin-stimulated adipocytes. Through the phosphorylation of CLK2 on 'Thr-343', involved in insulin-regulated suppression of hepatic gluconeogenesis. This Mus musculus (Mouse) protein is RAC-beta serine/threonine-protein kinase (Akt2).